The sequence spans 132 residues: Large ribosomal subunit protein uL14 (132 aa).

This sequence belongs to the universal ribosomal protein uL14 family. In terms of assembly, part of the 50S ribosomal subunit. Forms a cluster with proteins L3 and L24e, part of which may contact the 16S rRNA in 2 intersubunit bridges.

Its function is as follows. Binds to 23S rRNA. Forms part of two intersubunit bridges in the 70S ribosome. The chain is Large ribosomal subunit protein uL14 from Methanococcus vannielii.